Here is a 304-residue protein sequence, read N- to C-terminus: Nucleotide-binding protein ROP_69550 (304 aa).

24 to 31 (GLSGAGLQ) provides a ligand contact to ATP. 75 to 78 (DVRS) serves as a coordination point for GTP.

The protein belongs to the RapZ-like family.

Functionally, displays ATPase and GTPase activities. This is Nucleotide-binding protein ROP_69550 from Rhodococcus opacus (strain B4).